Reading from the N-terminus, the 214-residue chain is NAD(P)H-quinone oxidoreductase subunit 5, chloroplastic (214 aa).

The next 2 helical transmembrane spans lie at 84–104 (LFPLLILLLFTFFIGFIGIPF) and 152–172 (SLAILGLFIAYIFYGSAYSFF).

It belongs to the complex I subunit 5 family. As to quaternary structure, NDH is composed of at least 16 different subunits, 5 of which are encoded in the nucleus.

It localises to the plastid. Its subcellular location is the chloroplast thylakoid membrane. It carries out the reaction a plastoquinone + NADH + (n+1) H(+)(in) = a plastoquinol + NAD(+) + n H(+)(out). The enzyme catalyses a plastoquinone + NADPH + (n+1) H(+)(in) = a plastoquinol + NADP(+) + n H(+)(out). In terms of biological role, NDH shuttles electrons from NAD(P)H:plastoquinone, via FMN and iron-sulfur (Fe-S) centers, to quinones in the photosynthetic chain and possibly in a chloroplast respiratory chain. The immediate electron acceptor for the enzyme in this species is believed to be plastoquinone. Couples the redox reaction to proton translocation, and thus conserves the redox energy in a proton gradient. The sequence is that of NAD(P)H-quinone oxidoreductase subunit 5, chloroplastic (ndhF) from Brachypodium pinnatum (Tor grass).